Consider the following 221-residue polypeptide: NEDD4 family-interacting protein 1 (221 aa).

N-acetylalanine is present on Ala-2. Residues Ala-2–Pro-41 are interaction with UBE2L3. Topologically, residues Ala-2–Gly-116 are cytoplasmic. Residues Cys-15 to Ile-45 are disordered. 3 short sequence motifs (PPxY motif) span residues Pro-39 to Tyr-42, Pro-64 to Tyr-67, and Pro-74 to Tyr-76. An interaction with ITCH region spans residues Tyr-42–Tyr-76. A helical transmembrane segment spans residues Ile-117–Phe-137. Residues Cys-138–Ala-143 are Extracellular-facing. A helical membrane pass occupies residues Ala-144 to Val-164. Over Arg-165 to Gly-172 the chain is Cytoplasmic. Residues Tyr-173–Leu-193 form a helical membrane-spanning segment. Topologically, residues Arg-194–Tyr-221 are extracellular.

As to quaternary structure, forms heterodimers with NDFIP2. Interacts with several E3 ubiquitin-protein ligases, including ITCH, NEDD4, NEDD4L and WWP2. The interaction with NEDD4, NEDD4L and ITCH leads to relocalization of these proteins to exosomes and eventually to exosomal secretion. Interacts with SR1402. Interacts with SLC11A2/DMT1. Interacts with PTEN. May interact with phosphorylated EGFR. Interacts with BRAT1. Interacts with KCNH2. Interacts with MAVS. Part of a complex containing ITCH, NDFIP1 and MAP3K7. Interacts (via N-terminus) with UBE2L3; the interaction mediates recruitment of UBE2L3 to ITCH. In terms of processing, ubiquitinated by NEDD4; mono-, di- and polyubiquitinated forms are detected. Ubiquitination regulates its degradation. Undergoes transient tyrosine phosphorylation following EGF stimulation, most probably by catalyzed by SRC. Phosphorylation SRC is enhanced in the presence of NDFIP2 which may act as a scaffold to recruit SRC to NDFIP1.

It is found in the endosome membrane. The protein resides in the golgi apparatus membrane. It localises to the synapse. Its subcellular location is the synaptosome. The protein localises to the cell projection. It is found in the dendrite. The protein resides in the secreted. Its function is as follows. Activates HECT domain-containing E3 ubiquitin-protein ligases, including NEDD4 and ITCH, and consequently modulates the stability of their targets. As a result, controls many cellular processes. Prevents chronic T-helper cell-mediated inflammation by activating ITCH and thus controlling JUNB degradation. Promotes pancreatic beta cell death through degradation of JUNB and inhibition of the unfolded protein response, leading to reduction of insulin secretion. Restricts the production of pro-inflammatory cytokines in effector Th17 T-cells by promoting ITCH-mediated ubiquitination degradation of RORC. Together with NDFIP2, limits the cytokine signaling and expansion of effector Th2 T-cells by promoting degradation of JAK1, probably by ITCH- and NEDD4L-mediated ubiquitination. Regulates peripheral T-cell tolerance to self and foreign antigens, forcing the exit of naive CD4+ T-cells from the cell cycle before they become effector T-cells. Negatively regulates RLR-mediated antiviral response by promoting SMURF1-mediated ubiquitination and subsequent degradation of MAVS. Negatively regulates KCNH2 potassium channel activity by decreasing its cell-surface expression and interfering with channel maturation through recruitment of NEDD4L to the Golgi apparatus where it mediates KCNH2 degradation. In cortical neurons, mediates the ubiquitination of the divalent metal transporter SLC11A2/DMT1 by NEDD4L, leading to its down-regulation and protection of the cells from cobalt and iron toxicity. Important for normal development of dendrites and dendritic spines in cortex. Enhances the ubiquitination of BRAT1 mediated by: NEDD4, NEDD4L and ITCH and is required for the nuclear localization of ubiquitinated BRAT1. Enhances the ITCH-mediated ubiquitination of MAP3K7 by recruiting E2 ubiquitin-conjugating enzyme UBE2L3 to ITCH. Modulates EGFR signaling through multiple pathways. In particular, may regulate the ratio of AKT1-to-MAPK8 signaling in response to EGF, acting on AKT1 probably through PTEN destabilization and on MAPK8 through ITCH-dependent MAP2K4 inactivation. As a result, may control cell growth rate. Inhibits cell proliferation by promoting PTEN nuclear localization and changing its signaling specificity. The chain is NEDD4 family-interacting protein 1 (Ndfip1) from Rattus norvegicus (Rat).